Here is a 230-residue protein sequence, read N- to C-terminus: Flagellar L-ring protein (230 aa).

An N-terminal signal peptide occupies residues 1-15; sequence MSRLPSLSSLCLAIA. Cys16 carries N-palmitoyl cysteine lipidation. A lipid anchor (S-diacylglycerol cysteine) is attached at Cys16.

It belongs to the FlgH family. The basal body constitutes a major portion of the flagellar organelle and consists of four rings (L,P,S, and M) mounted on a central rod.

It is found in the cell outer membrane. The protein localises to the bacterial flagellum basal body. Its function is as follows. Assembles around the rod to form the L-ring and probably protects the motor/basal body from shearing forces during rotation. In Xanthomonas campestris pv. campestris (strain 8004), this protein is Flagellar L-ring protein.